Reading from the N-terminus, the 130-residue chain is Histone H2A type 1-F (130 aa).

The tract at residues 1-22 (MSGRGKQGGKARAKAKTRSSRA) is disordered. Serine 2 is modified (phosphoserine; by RPS6KA5). Arginine 4 carries the citrulline; alternate modification. Symmetric dimethylarginine; by PRMT5; alternate is present on arginine 4. Lysine 6 and lysine 10 each carry N6-(2-hydroxyisobutyryl)lysine. The span at 7–19 (QGGKARAKAKTRS) shows a compositional bias: basic residues. Residue lysine 10 is modified to N6-lactoyllysine; alternate. The residue at position 37 (lysine 37) is an N6-(2-hydroxyisobutyryl)lysine; alternate. Lysine 37 carries the post-translational modification N6-(beta-hydroxybutyryl)lysine; alternate. Position 37 is an N6-crotonyllysine; alternate (lysine 37). N6-(2-hydroxyisobutyryl)lysine is present on residues lysine 75, lysine 76, and lysine 96. Lysine 96 is subject to N6-glutaryllysine; alternate. N5-methylglutamine is present on glutamine 105. Residue lysine 119 is modified to N6-(2-hydroxyisobutyryl)lysine; alternate. 2 positions are modified to N6-crotonyllysine; alternate: lysine 119 and lysine 120. N6-glutaryllysine; alternate occurs at positions 119 and 120. A Glycyl lysine isopeptide (Lys-Gly) (interchain with G-Cter in ubiquitin); alternate cross-link involves residue lysine 120. Threonine 121 carries the phosphothreonine; by DCAF1 modification. N6-crotonyllysine; alternate is present on lysine 126. Lysine 126 is subject to N6-glutaryllysine; alternate.

It belongs to the histone H2A family. As to quaternary structure, the nucleosome is a histone octamer containing two molecules each of H2A, H2B, H3 and H4 assembled in one H3-H4 heterotetramer and two H2A-H2B heterodimers. The octamer wraps approximately 147 bp of DNA. In terms of processing, deiminated on Arg-4 in granulocytes upon calcium entry. Monoubiquitination of Lys-120 (H2AK119Ub) by RING1, TRIM37 and RNF2/RING2 complex gives a specific tag for epigenetic transcriptional repression and participates in X chromosome inactivation of female mammals. It is involved in the initiation of both imprinted and random X inactivation. Ubiquitinated H2A is enriched in inactive X chromosome chromatin. Ubiquitination of H2A functions downstream of methylation of 'Lys-27' of histone H3 (H3K27me). H2AK119Ub by RNF2/RING2 can also be induced by ultraviolet and may be involved in DNA repair. Following DNA double-strand breaks (DSBs), it is ubiquitinated through 'Lys-63' linkage of ubiquitin moieties by the E2 ligase UBE2N and the E3 ligases RNF8 and RNF168, leading to the recruitment of repair proteins to sites of DNA damage. Ubiquitination at Lys-14 and Lys-16 (H2AK13Ub and H2AK15Ub, respectively) in response to DNA damage is initiated by RNF168 that mediates monoubiquitination at these 2 sites, and 'Lys-63'-linked ubiquitin are then conjugated to monoubiquitin; RNF8 is able to extend 'Lys-63'-linked ubiquitin chains in vitro. H2AK119Ub and ionizing radiation-induced 'Lys-63'-linked ubiquitination (H2AK13Ub and H2AK15Ub) are distinct events. Post-translationally, phosphorylation on Ser-2 (H2AS1ph) is enhanced during mitosis. Phosphorylation on Ser-2 by RPS6KA5/MSK1 directly represses transcription. Acetylation of H3 inhibits Ser-2 phosphorylation by RPS6KA5/MSK1. Phosphorylation at Thr-121 (H2AT120ph) by DCAF1 is present in the regulatory region of many tumor suppresor genes and down-regulates their transcription. In terms of processing, symmetric dimethylation on Arg-4 by the PRDM1/PRMT5 complex may play a crucial role in the germ-cell lineage. Glutamine methylation at Gln-105 (H2AQ104me) by FBL is specifically dedicated to polymerase I. It is present at 35S ribosomal DNA locus and impairs binding of the FACT complex. Post-translationally, crotonylation (Kcr) is specifically present in male germ cells and marks testis-specific genes in post-meiotic cells, including X-linked genes that escape sex chromosome inactivation in haploid cells. Crotonylation marks active promoters and enhancers and confers resistance to transcriptional repressors. It is also associated with post-meiotically activated genes on autosomes. In terms of processing, lactylated in macrophages by EP300/P300 by using lactoyl-CoA directly derived from endogenous or exogenous lactate, leading to stimulates gene transcription.

The protein localises to the nucleus. It localises to the chromosome. Its function is as follows. Core component of nucleosome. Nucleosomes wrap and compact DNA into chromatin, limiting DNA accessibility to the cellular machineries which require DNA as a template. Histones thereby play a central role in transcription regulation, DNA repair, DNA replication and chromosomal stability. DNA accessibility is regulated via a complex set of post-translational modifications of histones, also called histone code, and nucleosome remodeling. In Rattus norvegicus (Rat), this protein is Histone H2A type 1-F.